Consider the following 219-residue polypeptide: Ras-related protein Rab-3B (219 aa).

Position 2 is an N-acetylalanine (alanine 2). GTP contacts are provided by serine 31, serine 32, valine 33, glycine 34, lysine 35, threonine 36, serine 37, proline 49, and serine 53. Serine 32 serves as a coordination point for GDP. Residues glycine 34, lysine 35, threonine 36, and serine 37 each contribute to the GDP site. Position 36 (threonine 36) interacts with Mg(2+). The Switch 1 motif lies at 45 to 58 (DTFTPAFVSTVGID). Residues threonine 54 and aspartate 77 each coordinate Mg(2+). Residues 78–96 (TAGQERYRTITTAYYRGAM) carry the Switch 2 motif. Position 80 (glycine 80) interacts with GTP. Threonine 86 is subject to Phosphothreonine; by LRRK2. Residues asparagine 135, lysine 136, and aspartate 138 each coordinate GTP. GDP is bound by residues asparagine 135, lysine 136, aspartate 138, methionine 139, alanine 166, and lysine 167. 2 residues coordinate GTP: alanine 166 and lysine 167. Residues serine 188 and serine 190 each carry the phosphoserine modification. S-geranylgeranyl cysteine attachment occurs at residues cysteine 217 and cysteine 219. Cysteine 219 is modified (cysteine methyl ester).

This sequence belongs to the small GTPase superfamily. Rab family. Interacts with RIMS1, RIMS2, RPH3A and RPH3AL. The GTP-bound form interacts with GAS8/DRC4 (via coiled-coil domains). The GTP-bound form interacts with REP15. Interacts with GDI2, CHM and CHML; phosphorylation at Thr-86 disrupts these interactions. Interacts with MADD (via uDENN domain); the GTP-bound form is preferred for interaction. Mg(2+) is required as a cofactor. Phosphorylation of Thr-86 in the switch II region by LRRK2 prevents the association of RAB regulatory proteins, including CHM, CHML and RAB GDP dissociation inhibitor GDI2.

The protein resides in the cell membrane. It localises to the golgi apparatus. It catalyses the reaction GTP + H2O = GDP + phosphate + H(+). Regulated by guanine nucleotide exchange factors (GEFs) which promote the exchange of bound GDP for free GTP. Regulated by GTPase activating proteins (GAPs) which increase the GTP hydrolysis activity. Inhibited by GDP dissociation inhibitors (GDIs) which prevent Rab-GDP dissociation. Functionally, the small GTPases Rab are key regulators of intracellular membrane trafficking, from the formation of transport vesicles to their fusion with membranes. Rabs cycle between an inactive GDP-bound form and an active GTP-bound form that is able to recruit to membranes different sets of downstream effectors directly responsible for vesicle formation, movement, tethering and fusion. The sequence is that of Ras-related protein Rab-3B from Homo sapiens (Human).